A 335-amino-acid chain; its full sequence is Cytoplasmic envelopment protein 2 (335 aa).

It belongs to the herpesviridae cytoplasmic envelopment protein 2 family. As to quaternary structure, interacts with cytoplasmic envelopment protein 3 and with the capsid.

Its subcellular location is the virion tegument. It is found in the host cytoplasm. It localises to the host nucleus. Functionally, plays a critical role in cytoplasmic virus egress. Participates in the final step of tegumentation and envelope acquisition within the host cytoplasm by directly interacting with the capsid. Upon virion binding to target cell, a signaling cascade is triggered to disrupt the interaction with the capsid, thereby preparing capsid uncoating. The sequence is that of Cytoplasmic envelopment protein 2 (U65) from Human herpesvirus 6B (strain Z29) (HHV-6 variant B).